We begin with the raw amino-acid sequence, 165 residues long: S-(2-succino)cysteine N-acetyltransferase (165 aa).

Positions 3 to 162 constitute an N-acetyltransferase domain; sequence PRYRLAVERD…ITVYMKKQLR (160 aa).

It belongs to the acetyltransferase family.

The catalysed reaction is S-(2-succino)-L-cysteine + acetyl-CoA = N-acetyl-S-(2-succino)-L-cysteine + CoA + H(+). It functions in the pathway amino-acid biosynthesis; L-cysteine biosynthesis. Functionally, catalyzes the N-acetylation of S-(2-succino)cysteine. Is involved in a S-(2-succino)cysteine (2SC) degradation pathway that allows B.subtilis to grow on 2SC as a sole sulfur source, via its metabolization to cysteine. Moreover, 2SC is a toxic compound in B.subtilis at high exogenous concentrations, and this enzyme relieves 2SC toxicity via N-acetylation. This is S-(2-succino)cysteine N-acetyltransferase from Bacillus subtilis (strain 168).